The chain runs to 247 residues: UPF0309 protein LMOf2365_2617 (247 aa).

The SIS domain maps to 31–214 (VAESIENDGV…ETMVNDNFTP (184 aa)).

Belongs to the UPF0309 family.

The polypeptide is UPF0309 protein LMOf2365_2617 (Listeria monocytogenes serotype 4b (strain F2365)).